A 296-amino-acid chain; its full sequence is tRNA dimethylallyltransferase (296 aa).

Residue 2 to 9 coordinates ATP; it reads GPTASGKT. 4–9 serves as a coordination point for substrate; the sequence is TASGKT. 3 interaction with substrate tRNA regions span residues 27–30, 151–155, and 232–237; these read DSAL, QRLAR, and RCVGYR.

Belongs to the IPP transferase family. In terms of assembly, monomer. Mg(2+) serves as cofactor.

The enzyme catalyses adenosine(37) in tRNA + dimethylallyl diphosphate = N(6)-dimethylallyladenosine(37) in tRNA + diphosphate. Functionally, catalyzes the transfer of a dimethylallyl group onto the adenine at position 37 in tRNAs that read codons beginning with uridine, leading to the formation of N6-(dimethylallyl)adenosine (i(6)A). This chain is tRNA dimethylallyltransferase, found in Shewanella pealeana (strain ATCC 700345 / ANG-SQ1).